The following is a 573-amino-acid chain: MISNFILFALFIVTIALITKPLGSYIFRVFNNERTYLDWLAKPFQRVYLLVLGESSKKEQTAKAYFFSLVSFSVMAFIFVLVILLLQGILPLNPQEIKGMSFPQALNTAVSFITNTNWQSYSGETGVSYFAQMLALAVQNFVSAAVGLCVAIALIRSVARHETATIGNFWNDLGKGVFWILLPISIVIAIVYIFQGVPQNVMAYLHVHTLAGTEQIIPQGPIASQEAIKSLGTNGGGFFNANSAHPYENPTVITNYIQMVSIFAIAAALTYTFGKWVGNTKQGWLIFGVMLVLFIISLVVMTISELHGLDFLHSKDIQDIYGQVGHLSNMEGKESRFGVFYSTLYNTVSTSASDGGVNSVLDSYSPLAGMMAMLNMAIGEVIFGGVGAGFYGFFMFLMLAVFIGSLMIGRAPSFLGKRIEANDMKWTMFALLISLCCVLVFTGLAAVIPSVHQTLTNSGAHGFSEILYAYISGANNNGSAFAGLSANTNYLNITIALSMLIGRFGVIFAVIMLAGSLVKKKRSLQMSEISSLDTTSFIFAILVFFTILLIGGLTIFPALGLGPILDQLNLNFL.

A run of 10 helical transmembrane segments spans residues 6-26, 66-86, 135-155, 177-197, 257-277, 283-303, 382-402, 428-448, 493-513, and 537-557; these read ILFA…GSYI, FFSL…ILLL, ALAV…IALI, VFWI…FQGV, IQMV…GKWV, GWLI…VMTI, IFGG…LAVF, MFAL…AAVI, ITIA…VIML, and FIFA…TIFP.

Belongs to the KdpA family. In terms of assembly, the system is composed of three essential subunits: KdpA, KdpB and KdpC.

The protein localises to the cell inner membrane. Functionally, part of the high-affinity ATP-driven potassium transport (or Kdp) system, which catalyzes the hydrolysis of ATP coupled with the electrogenic transport of potassium into the cytoplasm. This subunit binds the periplasmic potassium ions and delivers the ions to the membrane domain of KdpB through an intramembrane tunnel. This is Potassium-transporting ATPase potassium-binding subunit from Francisella tularensis subsp. tularensis (strain WY96-3418).